Here is a 513-residue protein sequence, read N- to C-terminus: Acyltransferase uat1 (513 aa).

The active-site Proton acceptor is His158.

It belongs to the plant acyltransferase family.

The protein operates within secondary metabolite biosynthesis. Its function is as follows. Acyltransferase; part of the gene cluster that mediates the biosynthesis of the glycolipid biosurfactant ustilagic acid (UA). UA is a secreted cellobiose glycolipid that is toxic for many microorganisms and confers biocontrol activity to U.maydis. UA consists of 15,16-dihydroxypalmitic or 2,15,16-trihydroxypalmitic acid, which is O-glycosidically linked to cellobiose at its terminal hydroxyl group. In addition, the cellobiose moiety is acetylated and acylated with a short-chain hydroxy fatty acid. UA biosynthesis starts with omega-hydroxylation of palmitic acid catalyzed by the cytochrome P450 monooxygenase cyp1. Terminal hydroxylation of palmitic acid precedes subterminal hydroxylation catalyzed by the cytochrome P450 monooxygenase cyp2. Sequential glucosylation of the hydroxy fatty acid is probably catalyzed by the glycosyltransferase ugt1. The cellobiose lipid is further decorated by acetylation of the proximal glucose residue and by acylation with a short-chain beta-hydroxy fatty acid at the distal glucose residue. The acyltransferase uat1 may be a good candidate for catalyzing either acetylation or acylation of the cellobiose lipid. The fatty acid synthase fas2 may be involved in synthesis of the carbon backbone of the short-chain beta-hydroxy fatty acid esterified to the cellobiose disaccharide. The secreted UA consists of a mixture of both alpha-hydroxylated and non-hydroxylated glycolipids; therefore, alpha-hydroxylation of the long-chain fatty, catalyzed by the fatty acid hydroxylase ahd1, occurs late in UA biosynthesis and may be the last step before secretion. The chain is Acyltransferase uat1 from Mycosarcoma maydis (Corn smut fungus).